Here is a 189-residue protein sequence, read N- to C-terminus: Adenylate kinase (189 aa).

11–16 serves as a coordination point for ATP; it reads GSGKGT. The tract at residues 31–60 is NMP; that stretch reads STGDVLRAEIKKGTELGKTAKGYIDQGQLL. AMP-binding positions include Thr32, Arg37, 58 to 60, 86 to 89, and Gln93; these read QLL and GFPR. Residues 127-137 form an LID region; sequence KRGQESGRADD. Arg128 provides a ligand contact to ATP. 2 residues coordinate AMP: Arg134 and Arg145. Gly173 contacts ATP.

This sequence belongs to the adenylate kinase family. As to quaternary structure, monomer.

The protein resides in the cytoplasm. It catalyses the reaction AMP + ATP = 2 ADP. It functions in the pathway purine metabolism; AMP biosynthesis via salvage pathway; AMP from ADP: step 1/1. In terms of biological role, catalyzes the reversible transfer of the terminal phosphate group between ATP and AMP. Plays an important role in cellular energy homeostasis and in adenine nucleotide metabolism. The chain is Adenylate kinase from Phocaeicola vulgatus (strain ATCC 8482 / DSM 1447 / JCM 5826 / CCUG 4940 / NBRC 14291 / NCTC 11154) (Bacteroides vulgatus).